Reading from the N-terminus, the 511-residue chain is Serine/threonine-protein kinase Nek3 (511 aa).

Residue methionine 1 is modified to N-acetylmethionine. Residues 1–282 are interaction with VAV2; that stretch reads MDNYTVLRVI…EQILDEIKIS (282 aa). The region spanning 4 to 255 is the Protein kinase domain; sequence YTVLRVIGQG…ATTLLCRGSL (252 aa). Residues 10 to 18 and lysine 33 each bind ATP; that span reads IGQGSFGRA. The active-site Proton acceptor is aspartate 125. Threonine 159 is subject to Phosphothreonine; by autocatalysis. Disordered regions lie at residues 299–370 and 443–511; these read LGEA…GPSS and GPLS…GERA. Residues 309-321 show a composition bias toward basic and acidic residues; it reads EEERGRKCSHTEL. Positions 472 to 485 are enriched in acidic residues; sequence LDEEDTDFEEDNEN. Position 477 is a phosphothreonine (threonine 477). Over residues 498-511 the composition is skewed to gly residues; it reads YGDGPGGQLLGERA.

The protein belongs to the protein kinase superfamily. NEK Ser/Thr protein kinase family. NIMA subfamily. As to quaternary structure, interacts with PXN, PRLR, VAV1 and VAV2 and this interaction is prolactin-dependent. The cofactor is Mg(2+). Post-translationally, phosphorylation at Thr-477 regulates its catalytic activity. In terms of tissue distribution, brain.

The protein localises to the cytoplasm. It localises to the cell projection. Its subcellular location is the axon. The enzyme catalyses L-seryl-[protein] + ATP = O-phospho-L-seryl-[protein] + ADP + H(+). The catalysed reaction is L-threonyl-[protein] + ATP = O-phospho-L-threonyl-[protein] + ADP + H(+). In terms of biological role, protein kinase which influences neuronal morphogenesis and polarity through effects on microtubules. Regulates microtubule acetylation in neurons. Contributes to prolactin-mediated phosphorylation of PXN and VAV2. The chain is Serine/threonine-protein kinase Nek3 (Nek3) from Mus musculus (Mouse).